Reading from the N-terminus, the 373-residue chain is Ca(2+)/H(+) antiporter (373 aa).

11 helical membrane passes run 6 to 26, 29 to 49, 61 to 81, 94 to 114, 134 to 154, 162 to 182, 220 to 240, 249 to 269, 291 to 311, 318 to 338, and 349 to 369; these read TIFF…WLHW, VSIF…MGEA, LGGL…AFIA, ITGS…LLGG, MNLA…SNGI, LSVA…LFSM, FWLG…ELLV, SLGL…GNAA, VGST…AGWI, LDFN…ANSI, and GSLL…HPVV.

Belongs to the Ca(2+):cation antiporter (CaCA) (TC 2.A.19) family. Cation/proton exchanger (CAX) subfamily.

Its subcellular location is the cell inner membrane. Functionally, ca(+)/H(+) antiporter that extrudes calcium in exchange for external protons. Plays an important role in salt tolerance. Does not transport sodium or lithium. The polypeptide is Ca(2+)/H(+) antiporter (Aphanothece halophytica).